The following is a 131-amino-acid chain: uncharacterized protein (131 aa).

Transmembrane regions (helical) follow at residues 5-25 (VQPI…YVLV) and 34-54 (MAVT…YVMN). A disordered region spans residues 62–131 (AAFKKAAKQS…KNKKKNRALF (70 aa)). Composition is skewed to basic residues over residues 66-92 (KAAK…RVSH) and 122-131 (KNKKKNRALF).

The protein localises to the cell membrane. This is an uncharacterized protein from Bacillus subtilis (strain 168).